Reading from the N-terminus, the 343-residue chain is Galactoside alpha-(1,2)-fucosyltransferase 2 (343 aa).

Residues 1-14 (MLVVQMPFSFPMAH) lie on the Cytoplasmic side of the membrane. Residues 15–28 (FILFVFTVSTIFHV) form a helical; Signal-anchor for type II membrane protein membrane-spanning segment. Residues 29–343 (QQRLAKIQAM…AADLSPLLKH (315 aa)) are Lumenal-facing. Asn-188, Asn-282, and Asn-308 each carry an N-linked (GlcNAc...) asparagine glycan.

This sequence belongs to the glycosyltransferase 11 family.

It is found in the golgi apparatus. The protein resides in the golgi stack membrane. It carries out the reaction a beta-D-galactosyl-(1-&gt;3)-N-acetyl-beta-D-glucosaminyl derivative + GDP-beta-L-fucose = an alpha-L-Fuc-(1-&gt;2)-beta-D-Gal-(1-&gt;3)-beta-D-GlcNAc derivative + GDP + H(+). It catalyses the reaction a beta-D-galactosyl-(1-&gt;4)-N-acetyl-beta-D-glucosaminyl derivative + GDP-beta-L-fucose = an alpha-L-Fuc-(1-&gt;2)-beta-D-Gal-(1-&gt;4)-beta-D-GlcNAc derivative + GDP + H(+). The enzyme catalyses a neolactoside nLc4Cer + GDP-beta-L-fucose = a neolactoside IV(2)-alpha-Fuc-nLc4Cer + GDP + H(+). The catalysed reaction is a neolactoside nLc4Cer(d18:1(4E)) + GDP-beta-L-fucose = a neolactoside IV(2)-alpha-Fuc-nLc4Cer(d18:1(4E)) + GDP + H(+). It carries out the reaction a ganglioside GM1 + GDP-beta-L-fucose = a ganglioside Fuc-GM1 + GDP + H(+). It catalyses the reaction a ganglioside GA1 + GDP-beta-L-fucose = a ganglioside Fuc-GA1 + GDP + H(+). The enzyme catalyses Lc4Cer + GDP-beta-L-fucose = alpha-L-fucosyl-(1-&gt;2)-beta-D-galactosyl-(1-&gt;3)-N-acetyl-beta-D-glucosaminyl-(1-&gt;3)-beta-D-galactosyl-(1-&gt;4)-beta-D-glucosyl-(1&lt;-&gt;1')-ceramide + GDP + H(+). The catalysed reaction is a beta-D-Gal-(1-&gt;3)-beta-D-GlcNAc-(1-&gt;3)-beta-D-Gal-(1-&gt;4)-beta-D-Glc-(1&lt;-&gt;1')-Cer(d18:1(4E)) + GDP-beta-L-fucose = alpha-L-fucosyl-(1-&gt;2)- beta-D-galactosyl-(1-&gt;3)-N-acetyl-beta-D-glucosaminyl-(1-&gt;3)-beta-D-galactosyl-(1-&gt;4)-beta-D-glucosyl-(1&lt;-&gt;1')-N-acylsphing-4-enine + GDP + H(+). It carries out the reaction a ganglioside GD1b + GDP-beta-L-fucose = a ganglioside Fuc-GD1b + GDP + H(+). It catalyses the reaction a ganglioside GM1 (d18:1(4E)) + GDP-beta-L-fucose = a ganglioside Fuc-GM1 (d18:1(4E)) + GDP + H(+). The enzyme catalyses a globoside GalGb4Cer (d18:1(4E)) + GDP-beta-L-fucose = a globoside Globo-H (d18:1(4E)) + GDP + H(+). The catalysed reaction is a lactoside III(4)-a-Fuc-Lc4Cer + GDP-beta-L-fucose = a lactoside IV(2),III(4)-a-[Fuc]2-Lc4Cer + GDP + H(+). It carries out the reaction beta-D-galactosyl-(1-&gt;3)-N-acetyl-D-galactosamine + GDP-beta-L-fucose = alpha-L-fucosyl-(1-&gt;2)-beta-D-galactosyl-(1-&gt;3)-N-acetyl-D-galactosamine + GDP + H(+). Its pathway is protein modification; protein glycosylation. Its function is as follows. Catalyzes the transfer of L-fucose, from a guanosine diphosphate-beta-L-fucose, to the terminal galactose on both O- and N-linked glycans chains of cell surface glycoproteins and glycolipids and the resulting epitope regulates several processes such as cell-cell interaction including host-microbe interaction, cell surface expression and cell proliferation. Preferentially fucosylates gangliosides GA1 and GM1 in the antrum, cecum and colon and in the female reproductive organs. Fucosylated host glycoproteins or glycolipids mediate interaction with intestinal microbiota influencing its composition. Creates a soluble precursor oligosaccharide FuC-alpha ((1,2)Galbeta-) called the H antigen which is an essential substrate for the final step in the soluble ABO blood group antigen synthesis pathway. In Hylobates lar (Lar gibbon), this protein is Galactoside alpha-(1,2)-fucosyltransferase 2.